The chain runs to 497 residues: 5'-AMP-activated protein kinase subunit gamma-3 (497 aa).

The interval 16 to 143 (STQTPSWSSF…SSSSTDDLDQ (128 aa)) is disordered. Residues 39–54 (GDSTSWPSPAMTTSAE) show a composition bias toward polar residues. The span at 68–79 (KSQEDVEERELP) shows a compositional bias: basic and acidic residues. 3 CBS domains span residues 204–265 (MATS…RSPL), 287–345 (CFKP…QRTL), and 363–423 (TFRD…HLDI). ADP contacts are provided by residues Arg-232, 247-252 (MLTITD), Val-292, 313-314 (HR), and Lys-332. AMP contacts are provided by residues Arg-232, 247 to 252 (MLTITD), Val-292, His-313, 313 to 314 (HR), Lys-332, Thr-363, Ala-368, 389 to 390 (SA), 405 to 408 (SRFD), Arg-432, Leu-440, His-461, 461 to 462 (HR), and 477 to 480 (SLSD). Residues Arg-232, 247–252 (MLTITD), Val-292, 313–314 (HR), Arg-314, and Lys-332 contribute to the ATP site. The AMPK pseudosubstrate signature appears at 300–321 (LFEAVYTLIKNRIHRLPVLDPV). ADP contacts are provided by residues 405–408 (SRFD), Arg-432, Leu-440, and 461–462 (HR). Residues 405–408 (SRFD), Arg-432, Leu-440, and 461–462 (HR) contribute to the ATP site. One can recognise a CBS 4 domain in the interval 435 to 494 (CLEGVLSCQPHETLGEVIDRIAREQVHRLVLVDETQHLLGVVSLSDILQALVLSPAGIDA).

Belongs to the 5'-AMP-activated protein kinase gamma subunit family. As to quaternary structure, AMPK is a heterotrimer of an alpha catalytic subunit (PRKAA1 or PRKAA2), a beta (PRKAB1 or PRKAB2) and a gamma non-catalytic subunits (PRKAG1, PRKAG2 or PRKAG3). Interacts with FNIP1 and FNIP2. Phosphorylated by ULK1; leading to negatively regulate AMPK activity and suggesting the existence of a regulatory feedback loop between ULK1 and AMPK. In terms of processing, glycosylated; O-GlcNAcylated by OGT, promoting the AMP-activated protein kinase (AMPK) activity.

Its function is as follows. AMP/ATP-binding subunit of AMP-activated protein kinase (AMPK), an energy sensor protein kinase that plays a key role in regulating cellular energy metabolism. In response to reduction of intracellular ATP levels, AMPK activates energy-producing pathways and inhibits energy-consuming processes: inhibits protein, carbohydrate and lipid biosynthesis, as well as cell growth and proliferation. AMPK acts via direct phosphorylation of metabolic enzymes, and by longer-term effects via phosphorylation of transcription regulators. AMPK also acts as a regulator of cellular polarity by remodeling the actin cytoskeleton; probably by indirectly activating myosin. The AMPK gamma3 subunit is a non-catalytic subunit with a regulatory role in muscle energy metabolism. It mediates binding to AMP, ADP and ATP, leading to AMPK activation or inhibition: AMP-binding results in allosteric activation of alpha catalytic subunit (PRKAA1 or PRKAA2) both by inducing phosphorylation and preventing dephosphorylation of catalytic subunits. ADP also stimulates phosphorylation, without stimulating already phosphorylated catalytic subunit. ATP promotes dephosphorylation of catalytic subunit, rendering the AMPK enzyme inactive. The sequence is that of 5'-AMP-activated protein kinase subunit gamma-3 (PRKAG3) from Bos taurus (Bovine).